An 837-amino-acid polypeptide reads, in one-letter code: V-type proton ATPase 116 kDa subunit a 1 (837 aa).

The Cytoplasmic portion of the chain corresponds to 1–388 (MGELFRSEEM…DAYGIGTYRE (388 aa)). A phosphothreonine mark is found at Thr-250 and Thr-360. Tyr-364 is modified (phosphotyrosine). Residues 389–407 (INPAPYTIITFPFLFAVMF) form a helical membrane-spanning segment. At 408–409 (GD) the chain is on the vacuolar side. A helical transmembrane segment spans residues 410–426 (FGHGILMTLFAVWMVLR). Residues 427 to 441 (ESRILSQKNENEMFS) lie on the Cytoplasmic side of the membrane. A helical membrane pass occupies residues 442-471 (TVFSGRYIILLMGVFSMYTGLIYNDCFSKS). The Vacuolar segment spans residues 472–534 (LNIFGSSWSV…ATNKLTFLNS (63 aa)). The N-linked (GalNAc...) asparagine glycan is linked to Asn-488. The helical transmembrane segment at 535-554 (FKMKMSVILGIIHMLFGVSL) threads the bilayer. The Cytoplasmic segment spans residues 555–572 (SLFNHIYFKKPLNIYFGF). Residues 573–593 (IPEIIFMTSLFGYLVILIFYK) traverse the membrane as a helical segment. The Vacuolar portion of the chain corresponds to 594-638 (WTAYDAHTSENAPSLLIHFINMFLFSYPESGYSMLYSGQKGIQCF). Residues 639–658 (LVVVALLCVPWMLLFKPLVL) form a helical membrane-spanning segment. The Cytoplasmic portion of the chain corresponds to 659 to 724 (RRQYLRRKHL…DTMVHQAIHT (66 aa)). Residues 725–749 (IEYCLGCISNTASYLRLWALSLAHA) traverse the membrane as a helical segment. Residues 750 to 770 (QLSEVLWTMVIHIGLSVKSLA) are Vacuolar-facing. A helical membrane pass occupies residues 771-809 (GGLVLFFFFTAFATLTVAILLIMEGLSAFLHALRLHWVE). Topologically, residues 810–837 (FQNKFYSGTGFKFLPFSFEHIREGKFEE) are cytoplasmic.

Belongs to the V-ATPase 116 kDa subunit family. As to quaternary structure, V-ATPase is a heteromultimeric enzyme made up of two complexes: the ATP-hydrolytic V1 complex and the proton translocation V0 complex. The V1 complex consists of three catalytic AB heterodimers that form a heterohexamer, three peripheral stalks each consisting of EG heterodimers, one central rotor including subunits D and F, and the regulatory subunits C and H. The proton translocation complex V0 consists of the proton transport subunit a, a ring of proteolipid subunits c9c'', rotary subunit d, subunits e and f, and the accessory subunits ATP6AP1/Ac45 and ATP6AP2/PRR. Interacts with SPAAR.

The protein resides in the cytoplasmic vesicle. Its subcellular location is the clathrin-coated vesicle membrane. The protein localises to the secretory vesicle. It localises to the synaptic vesicle membrane. It is found in the melanosome. Functionally, subunit of the V0 complex of vacuolar(H+)-ATPase (V-ATPase), a multisubunit enzyme composed of a peripheral complex (V1) that hydrolyzes ATP and a membrane integral complex (V0) that transports protons across cellular membranes. V-ATPase is responsible for the acidification of various organelles, such as lysosomes, endosomes, the trans-Golgi network, and secretory granules, including synaptic vesicles. In certain cell types, can be exported to the plasma membrane, where it is involved in the acidification of the extracellular environment. Required for assembly and activity of the vacuolar ATPase. Through its action on compartment acidification, plays an essential role in neuronal development in terms of integrity and connectivity of neurons. This chain is V-type proton ATPase 116 kDa subunit a 1 (ATP6V0A1), found in Homo sapiens (Human).